The sequence spans 179 residues: Ribosome maturation factor RimP (179 aa).

Belongs to the RimP family.

It localises to the cytoplasm. Functionally, required for maturation of 30S ribosomal subunits. This is Ribosome maturation factor RimP from Prosthecochloris aestuarii (strain DSM 271 / SK 413).